The following is a 415-amino-acid chain: Gamma-glutamyl phosphate reductase (415 aa).

Belongs to the gamma-glutamyl phosphate reductase family.

It localises to the cytoplasm. It carries out the reaction L-glutamate 5-semialdehyde + phosphate + NADP(+) = L-glutamyl 5-phosphate + NADPH + H(+). Its pathway is amino-acid biosynthesis; L-proline biosynthesis; L-glutamate 5-semialdehyde from L-glutamate: step 2/2. Its function is as follows. Catalyzes the NADPH-dependent reduction of L-glutamate 5-phosphate into L-glutamate 5-semialdehyde and phosphate. The product spontaneously undergoes cyclization to form 1-pyrroline-5-carboxylate. The chain is Gamma-glutamyl phosphate reductase from Bacillus velezensis (strain DSM 23117 / BGSC 10A6 / LMG 26770 / FZB42) (Bacillus amyloliquefaciens subsp. plantarum).